A 139-amino-acid chain; its full sequence is HTH-type transcriptional regulator MntR (139 aa).

The 63-residue stretch at 1–63 folds into the HTH dtxR-type domain; the sequence is MPTPSMEDHI…YEKYRGLTLT (63 aa). Mn(2+) contacts are provided by Asp-8, Glu-11, His-77, Glu-99, Glu-102, and His-103.

This sequence belongs to the DtxR/MntR family. In terms of assembly, homodimer.

The protein resides in the cytoplasm. DNA binding is strongly activated by Mn(2+). In terms of biological role, central regulator of manganese homeostasis. The protein is HTH-type transcriptional regulator MntR of Lysinibacillus sphaericus (strain C3-41).